The primary structure comprises 75 residues: Putative UPF0377 protein YAL067W-A (75 aa).

The protein belongs to the UPF0377 family.

The protein is Putative UPF0377 protein YAL067W-A of Saccharomyces cerevisiae (strain ATCC 204508 / S288c) (Baker's yeast).